The chain runs to 260 residues: Proteasome subunit alpha type-1 (260 aa).

Positions 240–260 are disordered; sequence PRTTGGAAAAAAPGGAEPMQM. Low complexity predominate over residues 244 to 260; that stretch reads GGAAAAAAPGGAEPMQM.

Belongs to the peptidase T1A family. In terms of assembly, the 26S proteasome consists of a 20S proteasome core and two 19S regulatory subunits. The 20S proteasome core is composed of 28 subunits that are arranged in four stacked rings, resulting in a barrel-shaped structure. The two end rings are each formed by seven alpha subunits, and the two central rings are each formed by seven beta subunits. The catalytic chamber with the active sites is on the inside of the barrel.

The protein localises to the cytoplasm. It is found in the nucleus. The proteasome is a multicatalytic proteinase complex which is characterized by its ability to cleave peptides with Arg, Phe, Tyr, Leu, and Glu adjacent to the leaving group at neutral or slightly basic pH. The proteasome has an ATP-dependent proteolytic activity. The polypeptide is Proteasome subunit alpha type-1 (pas-6) (Caenorhabditis elegans).